The sequence spans 96 residues: Small ribosomal subunit protein bS6 (96 aa).

This sequence belongs to the bacterial ribosomal protein bS6 family.

Binds together with bS18 to 16S ribosomal RNA. The chain is Small ribosomal subunit protein bS6 from Heliobacterium modesticaldum (strain ATCC 51547 / Ice1).